The primary structure comprises 115 residues: Delta-hexatoxin-Hi1a (115 aa).

The first 18 residues, 1 to 18 (MKVIATLYGLLFLTVVLG), serve as a signal peptide directing secretion. Residues 19–73 (DITEGNENDLVENFREELSEADIPLLKKLEAIEDALLEKDFLPYEEEDRNARPKR) constitute a propeptide that is removed on maturation. Disulfide bonds link Cys-74/Cys-88, Cys-81/Cys-93, Cys-87/Cys-104, and Cys-89/Cys-115.

The protein belongs to the neurotoxin 06 (delta-actx) family. As to expression, expressed by the venom gland.

Its subcellular location is the secreted. Neurotoxin that slows inactivation of voltage-gated sodium channels (Nav). In vivo, is lethal to both vertebrates and insects. This is Delta-hexatoxin-Hi1a from Hadronyche infensa (Fraser island funnel-web spider).